A 190-amino-acid chain; its full sequence is Transcription antitermination protein NusB (190 aa).

The tract at residues 135 to 190 is disordered; the sequence is APAPESVAEEADEESSDSAAAASEPTDEGDVSDSPDSSGASDEPAAPSAEIQPTVD. Positions 141–150 are enriched in acidic residues; the sequence is VAEEADEESS.

Belongs to the NusB family.

Functionally, involved in transcription antitermination. Required for transcription of ribosomal RNA (rRNA) genes. Binds specifically to the boxA antiterminator sequence of the ribosomal RNA (rrn) operons. This is Transcription antitermination protein NusB from Bifidobacterium longum (strain DJO10A).